Reading from the N-terminus, the 235-residue chain is Large ribosomal subunit protein uL1 (235 aa).

Belongs to the universal ribosomal protein uL1 family. Part of the 50S ribosomal subunit.

In terms of biological role, binds directly to 23S rRNA. The L1 stalk is quite mobile in the ribosome, and is involved in E site tRNA release. Protein L1 is also a translational repressor protein, it controls the translation of the L11 operon by binding to its mRNA. The polypeptide is Large ribosomal subunit protein uL1 (Lawsonia intracellularis (strain PHE/MN1-00)).